The following is a 203-amino-acid chain: Small ribosomal subunit protein uS7B (203 aa).

The protein belongs to the universal ribosomal protein uS7 family. In terms of assembly, component of the small ribosomal subunit (SSU). Mature yeast ribosomes consist of a small (40S) and a large (60S) subunit. The 40S small subunit contains 1 molecule of ribosomal RNA (18S rRNA) and at least 33 different proteins. The large 60S subunit contains 3 rRNA molecules (25S, 5.8S and 5S rRNA) and at least 46 different proteins.

It is found in the cytoplasm. Functionally, component of the ribosome, a large ribonucleoprotein complex responsible for the synthesis of proteins in the cell. The small ribosomal subunit (SSU) binds messenger RNAs (mRNAs) and translates the encoded message by selecting cognate aminoacyl-transfer RNA (tRNA) molecules. The large subunit (LSU) contains the ribosomal catalytic site termed the peptidyl transferase center (PTC), which catalyzes the formation of peptide bonds, thereby polymerizing the amino acids delivered by tRNAs into a polypeptide chain. The nascent polypeptides leave the ribosome through a tunnel in the LSU and interact with protein factors that function in enzymatic processing, targeting, and the membrane insertion of nascent chains at the exit of the ribosomal tunnel. This chain is Small ribosomal subunit protein uS7B (rps502), found in Schizosaccharomyces pombe (strain 972 / ATCC 24843) (Fission yeast).